The following is a 500-amino-acid chain: Phenylalanine--tRNA ligase alpha subunit (500 aa).

L-phenylalanine is bound by residues Thr-343, 382-384, and Phe-423; that span reads QID. Glu-425 is a binding site for Mg(2+). Position 448 (Phe-448) interacts with L-phenylalanine.

This sequence belongs to the class-II aminoacyl-tRNA synthetase family. Phe-tRNA synthetase alpha subunit type 2 subfamily. In terms of assembly, tetramer of two alpha and two beta subunits. Mg(2+) serves as cofactor.

It localises to the cytoplasm. It catalyses the reaction tRNA(Phe) + L-phenylalanine + ATP = L-phenylalanyl-tRNA(Phe) + AMP + diphosphate + H(+). This Pyrococcus abyssi (strain GE5 / Orsay) protein is Phenylalanine--tRNA ligase alpha subunit.